We begin with the raw amino-acid sequence, 249 residues long: 1-(5-phosphoribosyl)-5-[(5-phosphoribosylamino)methylideneamino] imidazole-4-carboxamide isomerase (249 aa).

Catalysis depends on Asp11, which acts as the Proton acceptor. Catalysis depends on Asp133, which acts as the Proton donor.

It belongs to the HisA/HisF family.

The protein resides in the cytoplasm. The enzyme catalyses 1-(5-phospho-beta-D-ribosyl)-5-[(5-phospho-beta-D-ribosylamino)methylideneamino]imidazole-4-carboxamide = 5-[(5-phospho-1-deoxy-D-ribulos-1-ylimino)methylamino]-1-(5-phospho-beta-D-ribosyl)imidazole-4-carboxamide. Its pathway is amino-acid biosynthesis; L-histidine biosynthesis; L-histidine from 5-phospho-alpha-D-ribose 1-diphosphate: step 4/9. This chain is 1-(5-phosphoribosyl)-5-[(5-phosphoribosylamino)methylideneamino] imidazole-4-carboxamide isomerase, found in Mannheimia succiniciproducens (strain KCTC 0769BP / MBEL55E).